A 260-amino-acid chain; its full sequence is Putative hydro-lyase Dshi_0610 (260 aa).

Belongs to the D-glutamate cyclase family.

The sequence is that of Putative hydro-lyase Dshi_0610 from Dinoroseobacter shibae (strain DSM 16493 / NCIMB 14021 / DFL 12).